Consider the following 421-residue polypeptide: Atrochrysone carboxyl ACP thioesterase (421 aa).

Zn(2+)-binding residues include His-207, His-209, Asp-211, and His-212. Asp-211 acts as the Proton donor/acceptor in catalysis.

It belongs to the metallo-beta-lactamase superfamily. It depends on Zn(2+) as a cofactor. In terms of tissue distribution, specifically expressed in conidia.

It catalyses the reaction atrochrysone carboxyl-[ACP] + H2O = atrochrysone carboxylate + holo-[ACP] + H(+). Its pathway is secondary metabolite biosynthesis. In terms of biological role, atrochrysone carboxyl ACP thioesterase; part of the gene cluster that mediates the biosynthesis of trypacidin, a mycotoxin with antiprotozoal activity and that plays a role in the infection process. The pathway begins with the synthesis of atrochrysone thioester by the polyketide synthase (PKS) tpcC. The atrochrysone carboxyl ACP thioesterase tpcB then breaks the thioester bond and releases the atrochrysone carboxylic acid from tpcC. The decarboxylase tpcK converts atrochrysone carboxylic acid to atrochrysone which is further reduced into emodin anthrone. The next step is performed by the emodin anthrone oxygenase tpcL that catalyzes the oxidation of emodin anthrone to emodin. Emodin O-methyltransferase encoded by tpcA catalyzes methylation of the 8-hydroxy group of emodin to form questin. Ring cleavage of questin by questin oxidase tpcI leads to desmethylsulochrin via several intermediates including questin epoxide. Another methylation step catalyzed by tpcM leads to the formation of sulochrin which is further converted to monomethylsulfochrin by tpcH. Finally, the tpcJ catalyzes the conversion of monomethylsulfochrin to trypacidin. Trypacidin is toxic for human pulmonary and bronchial epithelial cells by initiating the intracellular formation of nitric oxide (NO) and hydrogen peroxide (H(2)O(2)), thus triggering host necrotic cell death. The trypacidin pathway is also able to produce endocrocin via a distinct route from the endocrocin Enc pathway. This is Atrochrysone carboxyl ACP thioesterase from Aspergillus fumigatus (strain ATCC MYA-4609 / CBS 101355 / FGSC A1100 / Af293) (Neosartorya fumigata).